A 239-amino-acid polypeptide reads, in one-letter code: Serine protease SplC (239 aa).

An N-terminal signal peptide occupies residues 1-36; that stretch reads MNKNIVIKSMAALAILTSVTGINAAVVEETQQIANA. Catalysis depends on charge relay system residues His-75, Asp-113, and Ser-193.

It belongs to the peptidase S1B family.

Its subcellular location is the secreted. The sequence is that of Serine protease SplC (splC) from Staphylococcus aureus (strain USA300 / TCH1516).